We begin with the raw amino-acid sequence, 1119 residues long: Isoleucine--tRNA ligase (1119 aa).

The interval 1–43 (MVPRRSRQRPASSCRTAKTARREMPYPLPAPDGQEPEAQPVTP) is disordered. Positions 84–94 (PFANGLPHYGH) match the 'HIGH' region motif. A 'KMSKS' region motif is present at residues 676-680 (KVSKS). Lys679 provides a ligand contact to ATP.

This sequence belongs to the class-I aminoacyl-tRNA synthetase family. IleS type 2 subfamily. In terms of assembly, monomer. Requires Zn(2+) as cofactor.

The protein resides in the cytoplasm. It carries out the reaction tRNA(Ile) + L-isoleucine + ATP = L-isoleucyl-tRNA(Ile) + AMP + diphosphate. Catalyzes the attachment of isoleucine to tRNA(Ile). As IleRS can inadvertently accommodate and process structurally similar amino acids such as valine, to avoid such errors it has two additional distinct tRNA(Ile)-dependent editing activities. One activity is designated as 'pretransfer' editing and involves the hydrolysis of activated Val-AMP. The other activity is designated 'posttransfer' editing and involves deacylation of mischarged Val-tRNA(Ile). The polypeptide is Isoleucine--tRNA ligase (Leifsonia xyli subsp. xyli (strain CTCB07)).